The primary structure comprises 468 residues: ATP synthase subunit beta (468 aa).

155-162 serves as a coordination point for ATP; that stretch reads GGAGVGKT.

This sequence belongs to the ATPase alpha/beta chains family. As to quaternary structure, F-type ATPases have 2 components, CF(1) - the catalytic core - and CF(0) - the membrane proton channel. CF(1) has five subunits: alpha(3), beta(3), gamma(1), delta(1), epsilon(1). CF(0) has three main subunits: a(1), b(2) and c(9-12). The alpha and beta chains form an alternating ring which encloses part of the gamma chain. CF(1) is attached to CF(0) by a central stalk formed by the gamma and epsilon chains, while a peripheral stalk is formed by the delta and b chains.

It is found in the cell membrane. It catalyses the reaction ATP + H2O + 4 H(+)(in) = ADP + phosphate + 5 H(+)(out). Its function is as follows. Produces ATP from ADP in the presence of a proton gradient across the membrane. The catalytic sites are hosted primarily by the beta subunits. In Streptococcus agalactiae serotype III (strain NEM316), this protein is ATP synthase subunit beta.